Here is a 921-residue protein sequence, read N- to C-terminus: Isoleucine--tRNA ligase (921 aa).

The 'HIGH' region signature appears at 57–67 (PYANGELHMGH). Glu-552 lines the L-isoleucyl-5'-AMP pocket. The short motif at 593–597 (KMSKS) is the 'KMSKS' region element. Lys-596 contributes to the ATP binding site. Cys-888, Cys-891, Cys-908, and Cys-911 together coordinate Zn(2+).

It belongs to the class-I aminoacyl-tRNA synthetase family. IleS type 1 subfamily. As to quaternary structure, monomer. Zn(2+) serves as cofactor.

The protein resides in the cytoplasm. It carries out the reaction tRNA(Ile) + L-isoleucine + ATP = L-isoleucyl-tRNA(Ile) + AMP + diphosphate. In terms of biological role, catalyzes the attachment of isoleucine to tRNA(Ile). As IleRS can inadvertently accommodate and process structurally similar amino acids such as valine, to avoid such errors it has two additional distinct tRNA(Ile)-dependent editing activities. One activity is designated as 'pretransfer' editing and involves the hydrolysis of activated Val-AMP. The other activity is designated 'posttransfer' editing and involves deacylation of mischarged Val-tRNA(Ile). This Listeria innocua serovar 6a (strain ATCC BAA-680 / CLIP 11262) protein is Isoleucine--tRNA ligase.